The chain runs to 311 residues: tRNA dimethylallyltransferase (311 aa).

Residue 14-21 (GPTAVGKT) participates in ATP binding. Substrate is bound at residue 16–21 (TAVGKT). Positions 39-42 (DSMQ) are interaction with substrate tRNA.

Belongs to the IPP transferase family. Monomer. The cofactor is Mg(2+).

It carries out the reaction adenosine(37) in tRNA + dimethylallyl diphosphate = N(6)-dimethylallyladenosine(37) in tRNA + diphosphate. In terms of biological role, catalyzes the transfer of a dimethylallyl group onto the adenine at position 37 in tRNAs that read codons beginning with uridine, leading to the formation of N6-(dimethylallyl)adenosine (i(6)A). The chain is tRNA dimethylallyltransferase from Lactiplantibacillus plantarum (strain ATCC BAA-793 / NCIMB 8826 / WCFS1) (Lactobacillus plantarum).